The primary structure comprises 329 residues: MQTTLLKPKTIQVEQLAANKAKVTLEPFERGYGHTLGNALRRVLLSSMVGYSATEVTIAGVLHEYSSIDGVQEDVVNILLNLKGVVFKLHNRDEVTLSLRKDGEGPVLASDIQTPHDVEIINPDHVIAHLSQGGKLDMQIKVEKGRGYVPGTMRRYADEPTKSIGRIVLDASFSPVKRVSYTVESARVEQRTDLDKLLVEIETNGAITAEDAVRASAKILVEQLAVFAQLEGGELAAFDAPAPRSAQQFDPILLRPVDELELTVRSANCLKAENIYYIGDLIQRTENELLKTPNLGRKSLNEIKEVLASRGLTLGMKLESWPPAGLDKR.

The tract at residues 1-231 (MQTTLLKPKT…EQLAVFAQLE (231 aa)) is alpha N-terminal domain (alpha-NTD). Positions 249–329 (FDPILLRPVD…SWPPAGLDKR (81 aa)) are alpha C-terminal domain (alpha-CTD).

The protein belongs to the RNA polymerase alpha chain family. In terms of assembly, homodimer. The RNAP catalytic core consists of 2 alpha, 1 beta, 1 beta' and 1 omega subunit. When a sigma factor is associated with the core the holoenzyme is formed, which can initiate transcription.

It carries out the reaction RNA(n) + a ribonucleoside 5'-triphosphate = RNA(n+1) + diphosphate. DNA-dependent RNA polymerase catalyzes the transcription of DNA into RNA using the four ribonucleoside triphosphates as substrates. This is DNA-directed RNA polymerase subunit alpha from Variovorax paradoxus (strain S110).